The sequence spans 219 residues: MNSSTRYLSLLSALVVLVKGNPVPSALAELMTSGWTSGEELGTDGETGAPPKWEKMIKMLVHEVTTLRNQQFVEEFQKPVEEISSFSQHQVPSTPPHLSKTLCSASNKEACLQEISRGLQVYQLLLQHVKAEYPQSTLLPSVTHQTTVLIGLVKDQMKVAEVVEDLSASERKRVLGEVSTGTEWERKTSVHAILRELRNFLVDTKRALRRMGKRGKDFQ.

The N-terminal stretch at 1–20 is a signal peptide; it reads MNSSTRYLSLLSALVVLVKG. Cysteine 103 and cysteine 111 are oxidised to a cystine.

The protein belongs to the IL-6 superfamily. Component of a hexamer of two molecules each of IL6, IL6R and IL6ST; first binds to IL6R to associate with the signaling subunit IL6ST. In terms of tissue distribution, expressed in spleen, gill and gastrointestinal tract, ovary and brain. Highest expression in ovary.

It is found in the secreted. Functionally, cytokine with a wide variety of biological functions in immunity, tissue regeneration, and metabolism. Binds to IL6R, then the complex associates to the signaling subunit IL6ST/gp130 to trigger the intracellular IL6-signaling pathway. The interaction with the membrane-bound IL6R and IL6ST stimulates 'classic signaling', whereas the binding of IL6 and soluble IL6R to IL6ST stimulates 'trans-signaling'. Alternatively, 'cluster signaling' occurs when membrane-bound IL6:IL6R complexes on transmitter cells activate IL6ST receptors on neighboring receiver cells. The protein is Interleukin-6 (il6) of Oncorhynchus mykiss (Rainbow trout).